The sequence spans 210 residues: MLPDGLSAEDEQRCRQLLARTTARLRSRPAAAAVLVPLCLVRGVPALLYTLRSSRLVGRHKGEVSFPGGKCDPDDQDVIHTALRETQEELGLEVPKEHVWGVLQPVYDREKATIVPVLANVGPLDLQSLRPNLEEVDEVFEMSLAHLLQTQNQGYTHFCQGGHFSYTLPVFLHGPHRVWGLTAVITELTLKLLAPGFYQPSLAVPELPRG.

One can recognise a Nudix hydrolase domain in the interval 25–172; sequence LRSRPAAAAV…HFSYTLPVFL (148 aa). Lysine 70 is subject to N6-succinyllysine. The Nudix box signature appears at 70-91; sequence KCDPDDQDVIHTALRETQEELG. 2 residues coordinate Mg(2+): glutamate 85 and glutamate 89. N6-succinyllysine is present on lysine 96.

Belongs to the Nudix hydrolase family. Monomer. Mg(2+) serves as cofactor. The cofactor is Mn(2+). In terms of tissue distribution, expressed at the highest levels in the kidneys, heart, brown adipose tissue and liver (at protein level). Expressed at lower levels in the brain, skeletal muscle, and white adipose tissue (at protein level).

Its subcellular location is the mitochondrion. The enzyme catalyses an acyl-CoA + H2O = an acyl-4'-phosphopantetheine + adenosine 3',5'-bisphosphate + 2 H(+). The catalysed reaction is CoA + H2O = (R)-4'-phosphopantetheine + adenosine 3',5'-bisphosphate + 2 H(+). It carries out the reaction acetyl-CoA + H2O = S-acetyl-4'-phosphopantetheine + adenosine 3',5'-bisphosphate + 2 H(+). It catalyses the reaction butanoyl-CoA + H2O = S-butanoyl-4'-phosphopantetheine + adenosine 3',5'-bisphosphate + 2 H(+). The enzyme catalyses hexanoyl-CoA + H2O = hexanoyl-4'-phosphopantetheine + adenosine 3',5'-bisphosphate + 2 H(+). The catalysed reaction is octanoyl-CoA + H2O = S-octanoyl-4'-phosphopantetheine + adenosine 3',5'-bisphosphate + 2 H(+). It carries out the reaction propanoyl-CoA + H2O = propanoyl-4'-phosphopantetheine + adenosine 3',5'-bisphosphate + 2 H(+). It catalyses the reaction malonyl-CoA + H2O = malonyl-4'-phosphopantetheine + adenosine 3',5'-bisphosphate + 2 H(+). The enzyme catalyses succinyl-CoA + H2O = succinyl-4'-phosphopantetheine + adenosine 3',5'-bisphosphate + 2 H(+). The catalysed reaction is a 5'-end CoA-ribonucleoside in mRNA + H2O = a 5'-end phospho-adenosine-phospho-ribonucleoside in mRNA + (R)-4'-phosphopantetheine + 2 H(+). Acyl-CoA diphosphatase that mediates the hydrolysis of a wide range of CoA and CoA esters yielding 3',5'-ADP and the corresponding 4'-phosphopantetheine derivative as products. Hydrolyzes short- and medium-chain acyl-CoAs, exhibiting the highest activity toward free CoA, hexanoyl-CoA, and octanoyl-CoA and the lowest activity against acetyl-CoA. Exhibits decapping activity towards dpCoA-capped RNAs in vitro. The protein is Mitochondrial coenzyme A diphosphatase NUDT8 (Nudt8) of Mus musculus (Mouse).